The following is an 87-amino-acid chain: Small ribosomal subunit protein bS20 (87 aa).

The protein belongs to the bacterial ribosomal protein bS20 family.

Functionally, binds directly to 16S ribosomal RNA. This is Small ribosomal subunit protein bS20 from Clostridium botulinum (strain Eklund 17B / Type B).